Reading from the N-terminus, the 121-residue chain is UPF0102 protein BHWA1_02005 (121 aa).

It belongs to the UPF0102 family.

This Brachyspira hyodysenteriae (strain ATCC 49526 / WA1) protein is UPF0102 protein BHWA1_02005.